A 371-amino-acid polypeptide reads, in one-letter code: Serine/threonine-protein kinase 17B (371 aa).

Residues 33 to 293 (TLTPKELGRG…AESCLSHSWL (261 aa)) enclose the Protein kinase domain. ATP is bound by residues 39–47 (LGRGKFAVV) and lysine 62. Catalysis depends on aspartate 158, which acts as the Proton acceptor. The interval 308-345 (SESSQTQDLSLRSSEDKTPKSCNGSCGDREDKENIPED) is disordered. A compositionally biased stretch (polar residues) spans 309 to 319 (ESSQTQDLSLR).

Belongs to the protein kinase superfamily. CAMK Ser/Thr protein kinase family. DAP kinase subfamily. Interacts with CHP1; the interaction induces CHP1 to translocate from the Golgi to the nucleus. In terms of processing, autophosphorylated. As to expression, highly expressed in thymus, spleen, and testis, lower levels present in the brain.

It is found in the nucleus. It localises to the cell membrane. Its subcellular location is the endoplasmic reticulum-Golgi intermediate compartment. The catalysed reaction is L-seryl-[protein] + ATP = O-phospho-L-seryl-[protein] + ADP + H(+). It catalyses the reaction L-threonyl-[protein] + ATP = O-phospho-L-threonyl-[protein] + ADP + H(+). Its function is as follows. Acts as a positive regulator of apoptosis. Phosphorylates myosin light chains. The polypeptide is Serine/threonine-protein kinase 17B (Stk17b) (Rattus norvegicus (Rat)).